Consider the following 1198-residue polypeptide: Integrator complex subunit 2 (1198 aa).

A helical transmembrane segment spans residues 421-437 (FVSLSFCMLLAFSTLVS).

It belongs to the Integrator subunit 2 family. Component of the Integrator complex, composed of core subunits INTS1, INTS2, INTS3, INTS4, INTS5, INTS6, INTS7, INTS8, INTS9/RC74, INTS10, INTS11/CPSF3L, INTS12, INTS13, INTS14 and INTS15. The core complex associates with protein phosphatase 2A subunits PPP2CA and PPP2R1A, to form the Integrator-PP2A (INTAC) complex.

It localises to the nucleus. The protein resides in the nucleus membrane. It is found in the cytoplasm. Functionally, component of the integrator complex, a multiprotein complex that terminates RNA polymerase II (Pol II) transcription in the promoter-proximal region of genes. The integrator complex provides a quality checkpoint during transcription elongation by driving premature transcription termination of transcripts that are unfavorably configured for transcriptional elongation: the complex terminates transcription by (1) catalyzing dephosphorylation of the C-terminal domain (CTD) of Pol II subunit POLR2A/RPB1 and SUPT5H/SPT5, (2) degrading the exiting nascent RNA transcript via endonuclease activity and (3) promoting the release of Pol II from bound DNA. The integrator complex is also involved in terminating the synthesis of non-coding Pol II transcripts, such as enhancer RNAs (eRNAs), small nuclear RNAs (snRNAs), telomerase RNAs and long non-coding RNAs (lncRNAs). Mediates recruitment of cytoplasmic dynein to the nuclear envelope, probably as component of the integrator complex. This chain is Integrator complex subunit 2 (Ints2), found in Mus musculus (Mouse).